A 242-amino-acid chain; its full sequence is Venom nerve growth factor 3 (242 aa).

The N-terminal stretch at 1-18 (MSMLCYTLIIAFLIGIWA) is a signal peptide. Positions 19–125 (APKSEDNVPL…ALNRNIRSKR (107 aa)) are excised as a propeptide. A compositionally biased stretch (basic and acidic residues) spans 48–66 (LKTSRNTDQRHPAPKKAED). The tract at residues 48–69 (LKTSRNTDQRHPAPKKAEDQEL) is disordered. 3 disulfide bridges follow: Cys-139/Cys-203, Cys-181/Cys-231, and Cys-191/Cys-233. An N-linked (GlcNAc...) asparagine glycan is attached at Asn-147.

This sequence belongs to the NGF-beta family. In terms of assembly, homodimer; non-covalently linked. As to expression, expressed by the venom gland.

It is found in the secreted. In terms of biological role, nerve growth factor is important for the development and maintenance of the sympathetic and sensory nervous systems. It stimulates division and differentiation of sympathetic and embryonic sensory neurons as well as basal forebrain cholinergic neurons in the brain. Its relevance in the snake venom is not clear. However, it has been shown to inhibit metalloproteinase-dependent proteolysis of platelet glycoprotein Ib alpha, suggesting a metalloproteinase inhibition to prevent metalloprotease autodigestion and/or protection against prey proteases. Binds a lipid between the two protein chains in the homodimer. The lipid-bound form promotes histamine relase from mouse mast cells, contrary to the lipid-free form. This is Venom nerve growth factor 3 from Demansia vestigiata (Lesser black whip snake).